The chain runs to 152 residues: Acidic phospholipase A2 57 (152 aa).

The N-terminal stretch at 1-21 is a signal peptide; that stretch reads MYPAHLLGLLAVCVSLLGAAS. A propeptide spanning residues 22 to 27 is cleaved from the precursor; sequence IPPLPL. Disulfide bonds link cysteine 38–cysteine 104, cysteine 54–cysteine 151, cysteine 56–cysteine 72, cysteine 71–cysteine 132, cysteine 78–cysteine 125, cysteine 88–cysteine 118, and cysteine 111–cysteine 123. Positions 55, 57, and 59 each coordinate Ca(2+). Residue histidine 75 is part of the active site. Residue aspartate 76 participates in Ca(2+) binding. Residue aspartate 126 is part of the active site.

The protein belongs to the phospholipase A2 family. Group I subfamily. D49 sub-subfamily. Ca(2+) is required as a cofactor. Expressed by the venom gland.

The protein resides in the secreted. The catalysed reaction is a 1,2-diacyl-sn-glycero-3-phosphocholine + H2O = a 1-acyl-sn-glycero-3-phosphocholine + a fatty acid + H(+). Functionally, PLA2 catalyzes the calcium-dependent hydrolysis of the 2-acyl groups in 3-sn-phosphoglycerides. The sequence is that of Acidic phospholipase A2 57 from Hydrophis hardwickii (Hardwick's spine-bellied seasnake).